We begin with the raw amino-acid sequence, 320 residues long: Cytochrome f (320 aa).

Residues 1–35 (MQTRNAFSWLKKQITRSISVSLMIYILTRTSISSA) form the signal peptide. Tyrosine 36, cysteine 56, cysteine 59, and histidine 60 together coordinate heme. Residues 286–306 (AQGLLFFLASVILAQIFLVLK) form a helical membrane-spanning segment.

It belongs to the cytochrome f family. In terms of assembly, the 4 large subunits of the cytochrome b6-f complex are cytochrome b6, subunit IV (17 kDa polypeptide, petD), cytochrome f and the Rieske protein, while the 4 small subunits are PetG, PetL, PetM and PetN. The complex functions as a dimer. Heme serves as cofactor.

It is found in the plastid. It localises to the chloroplast thylakoid membrane. Its function is as follows. Component of the cytochrome b6-f complex, which mediates electron transfer between photosystem II (PSII) and photosystem I (PSI), cyclic electron flow around PSI, and state transitions. The polypeptide is Cytochrome f (Nicotiana tomentosiformis (Tobacco)).